Consider the following 679-residue polypeptide: MTERKREHKDRKQNKNSPKNQSKVTKFLKWFFIGILLLGITAVTVVGIYVLSIIRSSPELDVQAIQSLNQPSILYDDQGNFMDNVITREQRYVVKSEEIPDNLKKAFVAIEDERFYEHKGIDIKRIFGVIASNIKGKLSGSNTVQGASTITQQLIKNAVLTNEVSYERKIKEMYLALELEKHLSKDEILTTYLNTIPMGGYQYGVSAAAQRFFSKNVSDLNLVECAYLGGLTQAPTSYDGLSEANKENPSRYLNRTKSVLFKMHELGYISSEQYNDAINEIDTNGIKFTPNNKLSKTNFEWFTRPAITQVKQDLMDKYKYTQEEVDKLIANGGLKIYTSMDRNLQNNVQKVLDDPNNYKAITNNPNEKNEDGVYKLQASATIIDYKTGHVKALVGGRGEQPAMSHNRAYYDLKSIGSATKPLTVYGPAIDLGLGGAGSVVNDSPLSNKELSSTGYKDQPKNEYNSYRGPLTFREAIKISSNLAAIKVANEVGVSNSIAYGEKLGLVYGPHSRGISTTALGQFQNDPNNPDGGNTYTLASAFGVFGNNGVKTNAKLYTKVLDSHGNVILDTSTPEETKIFSPQASYIVYDMLKDQVESGSAKSAKFGNIPVAGKTGTTTGDKDYLFAGLTPYYSAAIWIGYDKPREMRTSSGTVTSPIFGKIMGLAHKDLQYKEVDNLVE.

A compositionally biased stretch (basic residues) spans 1-14 (MTERKREHKDRKQN). The tract at residues 1–20 (MTERKREHKDRKQNKNSPKN) is disordered. Residues 1 to 30 (MTERKREHKDRKQNKNSPKNQSKVTKFLKW) lie on the Cytoplasmic side of the membrane. Residues 31–51 (FFIGILLLGITAVTVVGIYVL) form a helical; Signal-anchor for type II membrane protein membrane-spanning segment. Topologically, residues 52–679 (SIIRSSPELD…QYKEVDNLVE (628 aa)) are extracellular. Residues 72–244 (SILYDDQGNF…PTSYDGLSEA (173 aa)) form a transglycosylase region. The Proton donor; for transglycosylase activity role is filled by Glu-111. The interval 378–663 (ASATIIDYKT…TSPIFGKIMG (286 aa)) is transpeptidase. The active-site Acyl-ester intermediate; for transpeptidase activity is Ser-417.

It in the N-terminal section; belongs to the glycosyltransferase 51 family. The protein in the C-terminal section; belongs to the transpeptidase family.

Its subcellular location is the cell membrane. It carries out the reaction [GlcNAc-(1-&gt;4)-Mur2Ac(oyl-L-Ala-gamma-D-Glu-L-Lys-D-Ala-D-Ala)](n)-di-trans,octa-cis-undecaprenyl diphosphate + beta-D-GlcNAc-(1-&gt;4)-Mur2Ac(oyl-L-Ala-gamma-D-Glu-L-Lys-D-Ala-D-Ala)-di-trans,octa-cis-undecaprenyl diphosphate = [GlcNAc-(1-&gt;4)-Mur2Ac(oyl-L-Ala-gamma-D-Glu-L-Lys-D-Ala-D-Ala)](n+1)-di-trans,octa-cis-undecaprenyl diphosphate + di-trans,octa-cis-undecaprenyl diphosphate + H(+). It catalyses the reaction Preferential cleavage: (Ac)2-L-Lys-D-Ala-|-D-Ala. Also transpeptidation of peptidyl-alanyl moieties that are N-acyl substituents of D-alanine.. It participates in cell wall biogenesis; peptidoglycan biosynthesis. Its function is as follows. Cell wall formation. Synthesis of cross-linked peptidoglycan from the lipid intermediates. The enzyme has a penicillin-insensitive transglycosylase N-terminal domain (formation of linear glycan strands) and a penicillin-sensitive transpeptidase C-terminal domain (cross-linking of the peptide subunits). The protein is Penicillin-binding protein 1A (pbpA) of Clostridium perfringens (strain 13 / Type A).